Consider the following 452-residue polypeptide: Tubulin alpha-1D chain (452 aa).

Residues 1-4 (MREC) carry the MREC motif motif. A GTP-binding site is contributed by glutamine 11. Residue lysine 40 is modified to N6-acetyllysine. Residues glutamate 71, serine 140, glycine 144, threonine 145, threonine 179, asparagine 206, and asparagine 228 each coordinate GTP. A Mg(2+)-binding site is contributed by glutamate 71. Glutamate 254 is a catalytic residue. A 3'-nitrotyrosine modification is found at tyrosine 282. The tract at residues 432 to 452 (YEEVGMDSVEGEGEEEEGDEY) is disordered. Serine 439 is modified (phosphoserine). Glutamate 446 bears the 5-glutamyl polyglutamate mark. Tyrosine 452 bears the 3'-nitrotyrosine mark.

This sequence belongs to the tubulin family. Dimer of alpha and beta chains. A typical microtubule is a hollow water-filled tube with an outer diameter of 25 nm and an inner diameter of 15 nM. Alpha-beta heterodimers associate head-to-tail to form protofilaments running lengthwise along the microtubule wall with the beta-tubulin subunit facing the microtubule plus end conferring a structural polarity. Microtubules usually have 13 protofilaments but different protofilament numbers can be found in some organisms and specialized cells. Requires Mg(2+) as cofactor. Some glutamate residues at the C-terminus are polyglycylated, resulting in polyglycine chains on the gamma-carboxyl group. Glycylation is mainly limited to tubulin incorporated into axonemes (cilia and flagella) whereas glutamylation is prevalent in neuronal cells, centrioles, axonemes, and the mitotic spindle. Both modifications can coexist on the same protein on adjacent residues, and lowering polyglycylation levels increases polyglutamylation, and reciprocally. Cilia and flagella glycylation is required for their stability and maintenance. Flagella glycylation controls sperm motility. In terms of processing, some glutamate residues at the C-terminus are polyglutamylated, resulting in polyglutamate chains on the gamma-carboxyl group. Polyglutamylation plays a key role in microtubule severing by spastin (SPAST). SPAST preferentially recognizes and acts on microtubules decorated with short polyglutamate tails: severing activity by SPAST increases as the number of glutamates per tubulin rises from one to eight, but decreases beyond this glutamylation threshold. Glutamylation is also involved in cilia motility. Post-translationally, acetylation of alpha chains at Lys-40 is located inside the microtubule lumen. This modification has been correlated with increased microtubule stability, intracellular transport and ciliary assembly. Methylation of alpha chains at Lys-40 is found in mitotic microtubules and is required for normal mitosis and cytokinesis contributing to genomic stability. In terms of processing, nitration of Tyr-452 is irreversible and interferes with normal dynein intracellular distribution. Post-translationally, undergoes a tyrosination/detyrosination cycle, the cyclic removal and re-addition of a C-terminal tyrosine residue by the enzymes tubulin tyrosine carboxypeptidase (MATCAP, VASH1 or VASH2) and tubulin tyrosine ligase (TTL), respectively. Tyrosination promotes microtubule interaction with CAP-Gly domain-containing proteins such as CLIP1, CLIP2 and DCTN1. Tyrosination regulates the initiation of dynein-dynactin motility via interaction with DCTN1, which brings the dynein-dynactin complex into contact with microtubules. In neurons, tyrosinated tubulins mediate the initiation of retrograde vesicle transport. In terms of processing, detyrosination is involved in metaphase plate congression by guiding chromosomes during mitosis: detyrosination promotes interaction with CENPE, promoting pole-proximal transport of chromosomes toward the equator. Detyrosination increases microtubules-dependent mechanotransduction in dystrophic cardiac and skeletal muscle. In cardiomyocytes, detyrosinated microtubules are required to resist to contractile compression during contraction: detyrosination promotes association with desmin (DES) at force-generating sarcomeres, leading to buckled microtubules and mechanical resistance to contraction.

Its subcellular location is the cytoplasm. The protein resides in the cytoskeleton. It catalyses the reaction GTP + H2O = GDP + phosphate + H(+). Functionally, tubulin is the major constituent of microtubules, a cylinder consisting of laterally associated linear protofilaments composed of alpha- and beta-tubulin heterodimers. Microtubules grow by the addition of GTP-tubulin dimers to the microtubule end, where a stabilizing cap forms. Below the cap, tubulin dimers are in GDP-bound state, owing to GTPase activity of alpha-tubulin. The chain is Tubulin alpha-1D chain (TUBA1D) from Bos taurus (Bovine).